The following is a 331-amino-acid chain: (+)-aristolochene synthase TS1 (331 aa).

A disordered region spans residues Met-1–Gly-22. Low complexity predominate over residues Ser-7–Gly-16. Mg(2+) contacts are provided by Asp-102, Asn-231, Ser-235, and Glu-239. The DDxx(x)D/E motif motif lies at Asp-102–Glu-106. The NDxxSxxxD/E motif motif lies at Asn-231 to Glu-239. Residues Arg-326 and Tyr-327 each contribute to the (2E,6E)-farnesyl diphosphate site.

This sequence belongs to the terpene synthase family. In terms of assembly, homodimer. Mg(2+) serves as cofactor.

It carries out the reaction (2E,6E)-farnesyl diphosphate = (+)-aristolochene + diphosphate. Its pathway is sesquiterpene biosynthesis; aristolochene biosynthesis; aristolochene from farnesyl diphosphate: step 1/1. Catalyzes the cyclization of trans,trans-farnesyl diphosphate (FPP) to the bicyclic sesquiterpene aristolochene. Aristolochene is the likely parent compound for a number of sesquiterpenoid toxins produced by filamentous fungi. The protein is (+)-aristolochene synthase TS1 of Penicillium expansum (Blue mold rot fungus).